We begin with the raw amino-acid sequence, 188 residues long: dCTP deaminase (188 aa).

Residues 111–116, 135–137, Gln156, Tyr170, Lys179, and Gln180 contribute to the dCTP site; these read KSTYAR and TLE. Glu137 functions as the Proton donor/acceptor in the catalytic mechanism.

Belongs to the dCTP deaminase family. In terms of assembly, homotrimer.

It catalyses the reaction dCTP + H2O + H(+) = dUTP + NH4(+). Its pathway is pyrimidine metabolism; dUMP biosynthesis; dUMP from dCTP (dUTP route): step 1/2. Catalyzes the deamination of dCTP to dUTP. The sequence is that of dCTP deaminase from Rickettsia canadensis (strain McKiel).